A 349-amino-acid polypeptide reads, in one-letter code: Glycerol-3-phosphate dehydrogenase [NAD(+)], cytoplasmic (349 aa).

10–15 contacts NAD(+); the sequence is GSGNWG. Lys120 provides a ligand contact to substrate. Ala153 contributes to the NAD(+) binding site. Ser154 bears the Phosphoserine mark. The Proton acceptor role is filled by Lys204. Arg269 is an NAD(+) binding site. 269–270 provides a ligand contact to substrate; that stretch reads RN. Lys289 carries the N6-succinyllysine modification. Positions 296 and 298 each coordinate NAD(+). Tyr326 is modified (phosphotyrosine).

It belongs to the NAD-dependent glycerol-3-phosphate dehydrogenase family. In terms of assembly, homodimer.

The protein resides in the cytoplasm. The enzyme catalyses sn-glycerol 3-phosphate + NAD(+) = dihydroxyacetone phosphate + NADH + H(+). In terms of biological role, has glycerol-3-phosphate dehydrogenase activity. The chain is Glycerol-3-phosphate dehydrogenase [NAD(+)], cytoplasmic (GPD1) from Pongo abelii (Sumatran orangutan).